The primary structure comprises 760 residues: Amyloid beta precursor protein binding family B member 2 (760 aa).

A phosphoserine mark is found at Ser-123 and Ser-160. Disordered regions lie at residues 177-295 (QNLG…LPPG) and 324-351 (PADL…KQPW). Composition is skewed to polar residues over residues 212-230 (NKPQ…SSSP) and 261-275 (SWTT…PSSP). Residues 290-322 (PDLPPGWKRVNDIAGTYYWHIPTGTTQWERPVS) enclose the WW domain. A phosphoserine mark is found at Ser-334, Ser-409, and Ser-412. PID domains lie at 413 to 580 (DPEA…LQVD) and 586 to 738 (TELV…VTTN).

In terms of assembly, interacts (via C-terminus) with APP (via C-terminus). Interacts with APLP2 (via cytoplasmic domain). Expressed in the brain, retinal lens and muscle cells (at protein level).

It is found in the endoplasmic reticulum. The protein localises to the golgi apparatus. Its subcellular location is the early endosome. Its function is as follows. Plays a role in the maintenance of lens transparency, and may also play a role in muscle cell strength. Involved in hippocampal neurite branching and neuromuscular junction formation, as a result plays a role in spatial memory functioning. Activates transcription of APP. The sequence is that of Amyloid beta precursor protein binding family B member 2 from Mus musculus (Mouse).